A 360-amino-acid chain; its full sequence is MSRTTVALFFGGQSAEHEISIISAQSIAAHLDTERFTLLPIYITHSGEWLCDGFARTLLTTNLASKLRGSSREETAAALQQMVRNAAQAPCNRNLAALGVDVAFLALHGSFGEDGRMQGFLETCGIPYTGCGVLASALTMDKALTKLCVADAGIAVAQGTNILSADYLANPNAVEASVEAQVSYPLFVKPASLGSSIGISKVHNREELHPALQAACALDWKVVVESTVKGREIEVAVLGNADPIASVCGEIEPGKEFYDFQDKYMGNSAKLFIPARIPESLQEEVRRSALTAYRALGCSGMARVDFFVDESTNSVVLNEVNTIPGFTDISMYPQMMEASGISYRNLITRLLELALEPLRR.

The ATP-grasp domain occupies 146–352; it reads KLCVADAGIA…YRNLITRLLE (207 aa). An ATP-binding site is contributed by 179 to 234; sequence EAQVSYPLFVKPASLGSSIGISKVHNREELHPALQAACALDWKVVVESTVKGREIE. Mg(2+) contacts are provided by Asp-305, Glu-319, and Asn-321.

It belongs to the D-alanine--D-alanine ligase family. It depends on Mg(2+) as a cofactor. Mn(2+) serves as cofactor.

It is found in the cytoplasm. The catalysed reaction is 2 D-alanine + ATP = D-alanyl-D-alanine + ADP + phosphate + H(+). It participates in cell wall biogenesis; peptidoglycan biosynthesis. In terms of biological role, cell wall formation. This Chlorobium chlorochromatii (strain CaD3) protein is D-alanine--D-alanine ligase.